A 431-amino-acid chain; its full sequence is MVNIIVVGLQWGDEGKGKVVDWLSTNADAVVRFQGGNNAGHTIVVNDNVYKLNLLPSSVLQNGKLSIIGNGVVLDPYALISEIENLKSNGINITSQNFAISESCPLVLSVHKQADMLFEQLRQDTIGTTNKGIGPCYADKISRRAIRVCDLFDPKDLLHNKVNHLLSYHNLLRKNINNPSIETENIVNELLSIAPKILPFVQPVWKTIHNLIEQNKTIIFEGAQGTFLDIDHGTYPFVTSSNTIAQQAFIGCGINPSNKTHILGLVKAYTTRVGNGPFFTEQNNNIGKTMFESGKELGTVSNRQRRCGWFDAVLARQAVILSGVSGLVMTKLDVLDQFSEIKICVKYKYENKIYDYLPASPYIQSKLEPVYETLPGWQTSTFGSVSYKDLPQNAISYIKKIEEILKVPIYLISTGPERNSMIIINNDFLYK.

Residues 12–18 (GDEGKGK) and 40–42 (GHT) each bind GTP. The active-site Proton acceptor is the D13. Residues D13 and G40 each coordinate Mg(2+). IMP is bound by residues 13–16 (DEGK), 38–41 (NAGH), T129, R143, Q224, T239, and R303. H41 functions as the Proton donor in the catalytic mechanism. Substrate is bound at residue 299 to 305 (TVSNRQR). GTP contacts are provided by residues R305, 331 to 333 (KLD), and 413 to 415 (STG).

This sequence belongs to the adenylosuccinate synthetase family. In terms of assembly, homodimer. Mg(2+) serves as cofactor.

It is found in the cytoplasm. The enzyme catalyses IMP + L-aspartate + GTP = N(6)-(1,2-dicarboxyethyl)-AMP + GDP + phosphate + 2 H(+). The protein operates within purine metabolism; AMP biosynthesis via de novo pathway; AMP from IMP: step 1/2. Functionally, plays an important role in the de novo pathway of purine nucleotide biosynthesis. Catalyzes the first committed step in the biosynthesis of AMP from IMP. The polypeptide is Adenylosuccinate synthetase (Ehrlichia canis (strain Jake)).